The following is a 720-amino-acid chain: Glutaryl-7-aminocephalosporanic-acid acylase (720 aa).

Residues 1-29 (MLRVLHRAASALVMATVIGLAPAVAFALA) form the signal peptide. The propeptide at 190–198 (DPPDLADQG) is spacer peptide. S199 acts as the Nucleophile in catalysis. Residues H221 and E653 contribute to the active site.

It belongs to the peptidase S45 family. As to quaternary structure, heterotetramer of two alpha and two beta subunits processed from the same precursor.

The protein resides in the periplasm. The enzyme catalyses (7R)-7-(4-carboxybutanamido)cephalosporanate + H2O = (7R)-7-aminocephalosporanate + glutarate. Its function is as follows. Catalyzes the deacylation of 7 beta-(4-carboxybutanamido)cephalosporanic acid (glutaryl-7-aminocephalosporanic acid or GL-7-ACA) to 7-aminocephalosporanic acid (7-ACA). The chain is Glutaryl-7-aminocephalosporanic-acid acylase from Pseudomonas sp. (strain SY-77).